The chain runs to 464 residues: ATP synthase subunit beta 2 (464 aa).

Gly147–Thr154 provides a ligand contact to ATP.

Belongs to the ATPase alpha/beta chains family. As to quaternary structure, F-type ATPases have 2 components, CF(1) - the catalytic core - and CF(0) - the membrane proton channel. CF(1) has five subunits: alpha(3), beta(3), gamma(1), delta(1), epsilon(1). CF(0) has four main subunits: a(1), b(1), b'(1) and c(9-12).

It localises to the cell inner membrane. The catalysed reaction is ATP + H2O + 4 H(+)(in) = ADP + phosphate + 5 H(+)(out). Its function is as follows. Produces ATP from ADP in the presence of a proton gradient across the membrane. The catalytic sites are hosted primarily by the beta subunits. The chain is ATP synthase subunit beta 2 from Cereibacter sphaeroides (strain ATCC 17029 / ATH 2.4.9) (Rhodobacter sphaeroides).